Reading from the N-terminus, the 243-residue chain is Urease accessory protein UreF (243 aa).

This sequence belongs to the UreF family. As to quaternary structure, ureD, UreF and UreG form a complex that acts as a GTP-hydrolysis-dependent molecular chaperone, activating the urease apoprotein by helping to assemble the nickel containing metallocenter of UreC. The UreE protein probably delivers the nickel.

The protein resides in the cytoplasm. In terms of biological role, required for maturation of urease via the functional incorporation of the urease nickel metallocenter. The protein is Urease accessory protein UreF of Xanthobacter autotrophicus (strain ATCC BAA-1158 / Py2).